The following is a 516-amino-acid chain: Cytochrome P450 1A1 (516 aa).

The mitochondrial targeting signal stretch occupies residues 33–44; it reads WQPRVPKGLKSP. O-linked (GlcNAc) serine glycosylation occurs at Ser-71. Phe-228 lines the substrate pocket. Cys-461 provides a ligand contact to heme.

Belongs to the cytochrome P450 family. Interacts with cytosolic chaperones HSP70 and HSP90; this interaction is required for initial targeting to mitochondria. Interacts (via mitochondrial targeting signal) with TOMM40 (via N-terminus); this interaction is required for translocation across the mitochondrial outer membrane. Heme is required as a cofactor.

The protein localises to the endoplasmic reticulum membrane. Its subcellular location is the mitochondrion inner membrane. The protein resides in the microsome membrane. It localises to the cytoplasm. The catalysed reaction is an organic molecule + reduced [NADPH--hemoprotein reductase] + O2 = an alcohol + oxidized [NADPH--hemoprotein reductase] + H2O + H(+). The enzyme catalyses estrone + reduced [NADPH--hemoprotein reductase] + O2 = 2-hydroxyestrone + oxidized [NADPH--hemoprotein reductase] + H2O + H(+). It catalyses the reaction estrone + reduced [NADPH--hemoprotein reductase] + O2 = 4-hydroxyestrone + oxidized [NADPH--hemoprotein reductase] + H2O + H(+). It carries out the reaction estrone + reduced [NADPH--hemoprotein reductase] + O2 = 6alpha-hydroxyestrone + oxidized [NADPH--hemoprotein reductase] + H2O + H(+). The catalysed reaction is estrone + reduced [NADPH--hemoprotein reductase] + O2 = 15alpha-hydroxyestrone + oxidized [NADPH--hemoprotein reductase] + H2O + H(+). The enzyme catalyses estrone + reduced [NADPH--hemoprotein reductase] + O2 = 16alpha-hydroxyestrone + oxidized [NADPH--hemoprotein reductase] + H2O + H(+). It catalyses the reaction 17beta-estradiol + reduced [NADPH--hemoprotein reductase] + O2 = 2-hydroxy-17beta-estradiol + oxidized [NADPH--hemoprotein reductase] + H2O + H(+). It carries out the reaction 17beta-estradiol + reduced [NADPH--hemoprotein reductase] + O2 = 4-hydroxy-17beta-estradiol + oxidized [NADPH--hemoprotein reductase] + H2O + H(+). The catalysed reaction is 17beta-estradiol + reduced [NADPH--hemoprotein reductase] + O2 = 6alpha-hydroxy-17beta-estradiol + oxidized [NADPH--hemoprotein reductase] + H2O + H(+). The enzyme catalyses 17beta-estradiol + reduced [NADPH--hemoprotein reductase] + O2 = 7alpha-hydroxy-17beta-estradiol + oxidized [NADPH--hemoprotein reductase] + H2O + H(+). It catalyses the reaction 17beta-estradiol + reduced [NADPH--hemoprotein reductase] + O2 = 15alpha-hydroxy-17beta-estradiol + oxidized [NADPH--hemoprotein reductase] + H2O + H(+). It carries out the reaction (5Z,8Z,11Z)-eicosatrienoate + reduced [NADPH--hemoprotein reductase] + O2 = 19-hydroxy-(5Z,8Z,11Z)-eicosatrienoate + oxidized [NADPH--hemoprotein reductase] + H2O + H(+). The catalysed reaction is (5Z,8Z,11Z,14Z)-eicosatetraenoate + reduced [NADPH--hemoprotein reductase] + O2 = 16-hydroxy-(5Z,8Z,11Z,14Z)-eicosatetraenoate + oxidized [NADPH--hemoprotein reductase] + H2O + H(+). The enzyme catalyses (5Z,8Z,11Z,14Z)-eicosatetraenoate + reduced [NADPH--hemoprotein reductase] + O2 = 17-hydroxy-(5Z,8Z,11Z,14Z)-eicosatetraenoate + oxidized [NADPH--hemoprotein reductase] + H2O + H(+). It catalyses the reaction (5Z,8Z,11Z,14Z)-eicosatetraenoate + reduced [NADPH--hemoprotein reductase] + O2 = 18-hydroxy-(5Z,8Z,11Z,14Z)-eicosatetraenoate + oxidized [NADPH--hemoprotein reductase] + H2O + H(+). It carries out the reaction (5Z,8Z,11Z,14Z)-eicosatetraenoate + reduced [NADPH--hemoprotein reductase] + O2 = 19-hydroxy-(5Z,8Z,11Z,14Z)-eicosatetraenoate + oxidized [NADPH--hemoprotein reductase] + H2O + H(+). The catalysed reaction is (5Z,8Z,11Z,14Z,17Z)-eicosapentaenoate + reduced [NADPH--hemoprotein reductase] + O2 = 19-hydroxy-(5Z,8Z,11Z,14Z,17Z)-eicosapentaenoate + oxidized [NADPH--hemoprotein reductase] + H2O + H(+). The enzyme catalyses (5Z,8Z,11Z,14Z)-eicosatetraenoate + reduced [NADPH--hemoprotein reductase] + O2 = (8R,9S)-epoxy-(5Z,11Z,14Z)-eicosatrienoate + oxidized [NADPH--hemoprotein reductase] + H2O + H(+). It catalyses the reaction (5Z,8Z,11Z,14Z)-eicosatetraenoate + reduced [NADPH--hemoprotein reductase] + O2 = (11R,12S)-epoxy-(5Z,8Z,14Z)-eicosatrienoate + oxidized [NADPH--hemoprotein reductase] + H2O + H(+). It carries out the reaction (5Z,8Z,11Z,14Z)-eicosatetraenoate + reduced [NADPH--hemoprotein reductase] + O2 = (14S,15R)-epoxy-(5Z,8Z,11Z)-eicosatrienoate + oxidized [NADPH--hemoprotein reductase] + H2O + H(+). The catalysed reaction is (5Z,8Z,11Z,14Z)-eicosatetraenoate + reduced [NADPH--hemoprotein reductase] + O2 = (14R,15S)-epoxy-(5Z,8Z,11Z)-eicosatrienoate + oxidized [NADPH--hemoprotein reductase] + H2O + H(+). The enzyme catalyses (5Z,8Z,11Z,14Z,17Z)-eicosapentaenoate + reduced [NADPH--hemoprotein reductase] + O2 = (17R,18S)-epoxy-(5Z,8Z,11Z,14Z)-eicosatetraenoate + oxidized [NADPH--hemoprotein reductase] + H2O + H(+). It catalyses the reaction (4Z,7Z,10Z,13Z,16Z,19Z)-docosahexaenoate + reduced [NADPH--hemoprotein reductase] + O2 = (19S,20R)-epoxy-(4Z,7Z,10Z,13Z,16Z)-docosapentaenoate + oxidized [NADPH--hemoprotein reductase] + H2O + H(+). It carries out the reaction (4Z,7Z,10Z,13Z,16Z,19Z)-docosahexaenoate + reduced [NADPH--hemoprotein reductase] + O2 = (19R,20S)-epoxy-(4Z,7Z,10Z,13Z,16Z)-docosapentaenoate + oxidized [NADPH--hemoprotein reductase] + H2O + H(+). The catalysed reaction is all-trans-retinol + reduced [NADPH--hemoprotein reductase] + O2 = all-trans-retinal + oxidized [NADPH--hemoprotein reductase] + 2 H2O + H(+). The enzyme catalyses all-trans-retinal + reduced [NADPH--hemoprotein reductase] + O2 = all-trans-retinoate + oxidized [NADPH--hemoprotein reductase] + H2O + 2 H(+). It catalyses the reaction (13S)-hydroperoxy-(9Z,11E)-octadecadienoate = 13-oxo-(9Z,11E)-octadecadienoate + H2O. It carries out the reaction (12S)-hydroperoxy-(5Z,8Z,10E,14Z)-eicosatetraenoate = 12-oxo-(5Z,8Z,10E,14Z)-eicosatetraenoate + H2O. The catalysed reaction is (15S)-hydroperoxy-(5Z,8Z,11Z,13E)-eicosatetraenoate = 15-oxo-(5Z,8Z,11Z,13E)-eicosatetraenoate + H2O. The enzyme catalyses (5S)-hydroperoxy-(6E,8Z,11Z,14Z)-eicosatetraenoate = 5-oxo-(6E,8Z,11Z,14Z)-eicosatetraenoate + H2O. It functions in the pathway steroid hormone biosynthesis. It participates in lipid metabolism; fatty acid metabolism. Its pathway is cofactor metabolism; retinol metabolism. Functionally, a cytochrome P450 monooxygenase involved in the metabolism of various endogenous substrates, including fatty acids, steroid hormones and vitamins. Mechanistically, uses molecular oxygen inserting one oxygen atom into a substrate, and reducing the second into a water molecule, with two electrons provided by NADPH via cytochrome P450 reductase (CPR; NADPH-ferrihemoprotein reductase). Catalyzes the hydroxylation of carbon-hydrogen bonds. Exhibits high catalytic activity for the formation of hydroxyestrogens from estrone (E1) and 17beta-estradiol (E2), namely 2-hydroxy E1 and E2, as well as D-ring hydroxylated E1 and E2 at the C15alpha and C16alpha positions. Displays different regioselectivities for polyunsaturated fatty acids (PUFA) hydroxylation. Catalyzes the epoxidation of double bonds of certain PUFA. Converts arachidonic acid toward epoxyeicosatrienoic acid (EET) regioisomers, 8,9-, 11,12-, and 14,15-EET, that function as lipid mediators in the vascular system. Displays an absolute stereoselectivity in the epoxidation of eicosapentaenoic acid (EPA) producing the 17(R),18(S) enantiomer. May play an important role in all-trans retinoic acid biosynthesis in extrahepatic tissues. Catalyzes two successive oxidative transformation of all-trans retinol to all-trans retinal and then to the active form all-trans retinoic acid. May also participate in eicosanoids metabolism by converting hydroperoxide species into oxo metabolites (lipoxygenase-like reaction, NADPH-independent). This is Cytochrome P450 1A1 (CYP1A1) from Balaenoptera acutorostrata (Common minke whale).